We begin with the raw amino-acid sequence, 145 residues long: UPF0179 protein Msm_0285 (145 aa).

The protein belongs to the UPF0179 family.

In Methanobrevibacter smithii (strain ATCC 35061 / DSM 861 / OCM 144 / PS), this protein is UPF0179 protein Msm_0285.